The chain runs to 345 residues: tRNA dimethylallyltransferase (345 aa).

An ATP-binding site is contributed by Gly-9–Ser-16. Thr-11–Ser-16 is a binding site for substrate. 2 interaction with substrate tRNA regions span residues Asp-34–Gln-37 and Gln-195–Arg-199.

Belongs to the IPP transferase family. Monomer. The cofactor is Mg(2+).

The catalysed reaction is adenosine(37) in tRNA + dimethylallyl diphosphate = N(6)-dimethylallyladenosine(37) in tRNA + diphosphate. Its function is as follows. Catalyzes the transfer of a dimethylallyl group onto the adenine at position 37 in tRNAs that read codons beginning with uridine, leading to the formation of N6-(dimethylallyl)adenosine (i(6)A). This is tRNA dimethylallyltransferase from Orientia tsutsugamushi (strain Ikeda) (Rickettsia tsutsugamushi).